Consider the following 359-residue polypeptide: Aromatic amino acid aminotransferase (359 aa).

Lys223 bears the N6-(pyridoxal phosphate)lysine mark.

This sequence belongs to the class-II pyridoxal-phosphate-dependent aminotransferase family. As to quaternary structure, homodimer. The cofactor is pyridoxal 5'-phosphate.

It catalyses the reaction an aromatic L-alpha-amino acid + 2-oxoglutarate = an aromatic oxo-acid + L-glutamate. Aminotransferase that catalyzes the conversion of aromatic amino acids and 2-oxoglutarate into corresponding aromatic oxo acids and L-glutamate. The sequence is that of Aromatic amino acid aminotransferase from Streptomyces avermitilis (strain ATCC 31267 / DSM 46492 / JCM 5070 / NBRC 14893 / NCIMB 12804 / NRRL 8165 / MA-4680).